Consider the following 163-residue polypeptide: Dual specificity phosphatase 28 (163 aa).

The Tyrosine-protein phosphatase domain occupies 10-151 (PFARVAPALF…LQKYEQTLQA (142 aa)). Cys-95 acts as the Phosphocysteine intermediate in catalysis.

It belongs to the protein-tyrosine phosphatase family. Non-receptor class dual specificity subfamily. As to quaternary structure, monomer.

The enzyme catalyses O-phospho-L-tyrosyl-[protein] + H2O = L-tyrosyl-[protein] + phosphate. The catalysed reaction is O-phospho-L-seryl-[protein] + H2O = L-seryl-[protein] + phosphate. It catalyses the reaction O-phospho-L-threonyl-[protein] + H2O = L-threonyl-[protein] + phosphate. Functionally, has phosphatase activity with the synthetic substrate 6,8-difluoro-4-methylumbelliferyl phosphate (in vitro). Has almost no detectable activity with phosphotyrosine, even less activity with phosphothreonine and displays complete lack of activity with phosphoserine. The poor activity with phosphotyrosine may be due to steric hindrance by bulky amino acid sidechains that obstruct access to the active site. The chain is Dual specificity phosphatase 28 (Dusp28) from Mus musculus (Mouse).